The sequence spans 188 residues: Pyridoxal 5'-phosphate synthase subunit PdxT (188 aa).

Position 47–49 (47–49 (GES)) interacts with L-glutamine. C79 functions as the Nucleophile in the catalytic mechanism. L-glutamine is bound by residues R105 and 134–135 (IR). Residues H170 and E172 each act as charge relay system in the active site.

The protein belongs to the glutaminase PdxT/SNO family. In the presence of PdxS, forms a dodecamer of heterodimers. Only shows activity in the heterodimer.

The enzyme catalyses aldehydo-D-ribose 5-phosphate + D-glyceraldehyde 3-phosphate + L-glutamine = pyridoxal 5'-phosphate + L-glutamate + phosphate + 3 H2O + H(+). The catalysed reaction is L-glutamine + H2O = L-glutamate + NH4(+). It participates in cofactor biosynthesis; pyridoxal 5'-phosphate biosynthesis. Its function is as follows. Catalyzes the hydrolysis of glutamine to glutamate and ammonia as part of the biosynthesis of pyridoxal 5'-phosphate. The resulting ammonia molecule is channeled to the active site of PdxS. This is Pyridoxal 5'-phosphate synthase subunit PdxT from Listeria monocytogenes serotype 4b (strain CLIP80459).